The sequence spans 994 residues: Chloride channel protein 1 (994 aa).

Topologically, residues 1 to 118 (MERSQSQRHG…VLRRKLGEDW (118 aa)) are cytoplasmic. The chain crosses the membrane as a helical span at residues 119-150 (IFLVLLGLLMALVSWCMDYVSAKSLQAYKWTY). At 151 to 158 (AQMKPSLP) the chain is on the extracellular side. Residues 159–179 (LQYLAWVTFPLILILFSALFC) traverse the membrane as a helical segment. Topologically, residues 180–183 (QLIS) are cytoplasmic. Positions 184–189 (PQAVGS) form an intramembrane region, note=Loop between two helices. The Selectivity filter part_1 motif lies at 188–192 (GSGIP). Ser-189 contacts chloride. The helical intramembrane region spans 190-195 (GIPEMK). Over 196–208 (TILRGVVLKEYLT) the chain is Cytoplasmic. Residues 209–224 (LKAFVAKVVALTAGLG) constitute an intramembrane region (helical). Residues 225-230 (SGIPVG) constitute an intramembrane region (note=Loop between two helices). The short motif at 230 to 234 (GKEGP) is the Selectivity filter part_2 element. The helical intramembrane region spans 231–246 (KEGPFVHIASICAAVL). Over 247–268 (SKFMSMFSGVYEQPYYYTDILT) the chain is Cytoplasmic. 2 consecutive intramembrane regions (helical) follow at residues 269 to 280 (VGCAVGVGCCFG) and 281 to 290 (TPLGGVLFSI). Residues 291-301 (EVTSTYFAVRN) lie on the Cytoplasmic side of the membrane. Residues 302 to 321 (YWRGFFAATFSAFVFRVLAV) form a helical membrane-spanning segment. Over 322-347 (WNKDAVTITALFRTNFRMDFPFDLKE) the chain is Extracellular. The chain crosses the membrane as a helical span at residues 348 to 376 (LPAFAVIGICCGFLGAVFVYLHRQVMLGV). Over 377–390 (RKHKCLSQFLAKHR) the chain is Cytoplasmic. The chain crosses the membrane as a helical span at residues 391 to 408 (LLYPGIVTFVIASLTFPP). Over 409 to 414 (GMGQFM) the chain is Extracellular. The segment at residues 415–418 (AGEL) is an intramembrane region (note=Loop between two helices). An intramembrane region (helical) is located at residues 419–426 (MPREAIST). The Extracellular segment spans residues 427–457 (LFDNNTWVKHIGDPQSLGQSAVWLHPQVNVI). The helical intramembrane region spans 458-475 (IIILLFFVMKFWMSIVAT). An intramembrane region (note=Loop between two helices) is located at residues 476–482 (TMPIPCG). A Selectivity filter part_3 motif is present at residues 482-486 (GGFMP). The segment at residues 483–498 (GFMPVFVLGAAFGRLV) is an intramembrane region (helical). A chloride-binding site is contributed by Phe-484. Residues 499–521 (GEIMAMLFPEGILFDDIIYKILP) lie on the Extracellular side of the membrane. Residues 522 to 538 (GGYAVIGAAALTGAVSH) constitute an intramembrane region (helical). The segment at residues 539–540 (TV) is an intramembrane region (note=Loop between two helices). Residues 541–554 (STAVICFELTGQIA) constitute an intramembrane region (helical). At 555-557 (HIL) the chain is on the extracellular side. An intramembrane region (helical) is located at residues 558–571 (PMMVAVILANMVAQ). Positions 572–575 (SLQP) form an intramembrane region, note=Loop between two helices. Positions 576 to 578 (SLY) form an intramembrane region, helical. Chloride is bound at residue Tyr-578. The Cytoplasmic segment spans residues 579–994 (DSIIQVKKLP…DEEDEDELIL (416 aa)). One can recognise a CBS 1 domain in the interval 609–668 (MVRDVKFVSASCTYGELRNLLQATTVKTLPLVDSKDSMILLGSVERSELQSLLQRHLCAE). The disordered stretch occupies residues 710–770 (EDEDEDLSRK…PEASDSADQR (61 aa)). Pro residues predominate over residues 725-739 (TPAPPPPSPPPPPSQ). The region spanning 827 to 882 (IDQSPFQLVEQTTLHKTHTLFSLLGLHLAYVTSMGKLRGVLALEELQKAIEGHTKS) is the CBS 2 domain. Disordered regions lie at residues 886-954 (LRPP…ARAE) and 971-994 (ELAD…ELIL). Ser-892 bears the Phosphoserine mark. Over residues 933-943 (PETPVPPPSPE) the composition is skewed to pro residues. The span at 985-994 (DEEDEDELIL) shows a compositional bias: acidic residues.

This sequence belongs to the chloride channel (TC 2.A.49) family. ClC-1/CLCN1 subfamily. In terms of assembly, homodimer. Predominantly expressed in skeletal muscles.

The protein localises to the cell membrane. Its subcellular location is the sarcolemma. It is found in the T-tubule. It carries out the reaction chloride(in) = chloride(out). The catalysed reaction is thiocyanate(in) = thiocyanate(out). It catalyses the reaction bromide(in) = bromide(out). The enzyme catalyses nitrate(in) = nitrate(out). It carries out the reaction iodide(out) = iodide(in). Its activity is regulated as follows. Modulated by membrane voltage with depolarization favouring channel opening and hyperpolarization favouring channel closure. Inhibited by acidic pH and ATP binding due to a shift of voltage dependence of common gating to more positive voltages. Inhibited by 9-anthracene-carboxylic. Its function is as follows. Voltage-gated chloride channel involved in skeletal muscle excitability. Generates most of the plasma membrane chloride conductance in skeletal muscle fibers, stabilizes the resting membrane potential and contributes to the repolarization phase during action potential firing. Forms a homodimeric channel where each subunit has its own ion conduction pathway. Conducts double-barreled currents controlled by two types of gates, two fast glutamate gates that control each subunit independently and a slow common gate that opens and shuts off both subunits simultaneously. Has a significant open probability at muscle resting potential and is further activated upon membrane depolarization. Permeable to small monovalent anions with ion selectivity for chloride &gt; thiocyanate &gt; bromide &gt; nitrate &gt; iodide. This chain is Chloride channel protein 1 (Clcn1), found in Mus musculus (Mouse).